The following is a 1163-amino-acid chain: Voltage-gated inwardly rectifying potassium channel KCNH2 (1163 aa).

Residues 1–405 (MPVRRGHVAP…RIHRWTILHY (405 aa)) lie on the Cytoplasmic side of the membrane. The PAS domain maps to 17-88 (TIIRKFEGQS…AAQIAQALLG (72 aa)). Residues 92–144 (RKVEIAFYRKDGSCFLCLVDVVPVKNEDGAVIMFILNFEVVMEKDMVGSPAHD) enclose the PAC domain. Residues 235–286 (VGPASASPVASIPGPHPSPRAQSLNPDASGSSCSLARTRSRESCASVRRASS) are disordered. Serine 239 and serine 245 each carry phosphoserine. The span at 254-271 (RAQSLNPDASGSSCSLAR) shows a compositional bias: polar residues. Phosphoserine occurs at positions 285, 286, 322, and 353. Residues 406–426 (SPFKAVWDWLILLLVIYTAVF) form a helical membrane-spanning segment. At 427-452 (TPYSAAFLLKETEDGSQAPDCGYACQ) the chain is on the extracellular side. A helical membrane pass occupies residues 453 to 473 (PLAVVDLLVDIMFIVDILINF). Residues 474–497 (RTTYVNANEEVVSHPGRIAVHYFK) lie on the Cytoplasmic side of the membrane. A helical transmembrane segment spans residues 498–518 (GWFLIDMVAAIPFDLLIFGSG). Residues 519–522 (SEEL) are Extracellular-facing. A helical; Voltage-sensor transmembrane segment spans residues 523 to 543 (IGLLKTARLLRLVRVARKLDR). Over 544–549 (YSEYGA) the chain is Cytoplasmic. A helical membrane pass occupies residues 550–570 (AVLFLLMCTFALIAHWLACIW). Residues 571–613 (YAIGNMEQPHMDSHIGWLHNLGDQIGKPYNSSGLGGPSIKDKY) are Extracellular-facing. Asparagine 600 carries an N-linked (GlcNAc...) asparagine glycan. Residues 614 to 634 (VTALYFTFSSLTSVGFGNVSP) constitute an intramembrane region (pore-forming). Positions 626-631 (SVGFGN) match the Selectivity filter motif. At 635–640 (NTNSEK) the chain is on the extracellular side. A helical transmembrane segment spans residues 641–661 (IFSICVMLIGSLMYASIFGNV). The Cytoplasmic segment spans residues 662-1163 (SAIIQRLYSG…LHRHGSDPGS (502 aa)). The cNMP-binding domain stretch occupies residues 744-844 (PFRGATKGCL…IHRDDLLEVL (101 aa)). A phosphoserine mark is found at serine 873 and serine 876. Disordered regions lie at residues 873 to 992 (SPSS…NPLS), 1015 to 1043 (ELPR…GDVE), and 1126 to 1163 (AGAP…DPGS). A compositionally biased stretch (basic residues) spans 885–894 (RQRKRKLSFR). A compositionally biased stretch (low complexity) spans 932 to 943 (GESPSSGPSSPE). Residue arginine 1018 is modified to Omega-N-methylarginine. A coiled-coil region spans residues 1039–1066 (RGDVESRLDALQRQLNRLETRLSADMAT). Serine 1141 carries the post-translational modification Phosphoserine.

This sequence belongs to the potassium channel family. H (Eag) (TC 1.A.1.20) subfamily. Kv11.1/KCNH2 sub-subfamily. In terms of assembly, the potassium channel is probably composed of a homo- or heterotetrameric complex of pore-forming alpha subunits that can associate with modulating beta subunits. Interacts with DNAJB12 and DNAJB14; chaperones DNAJB12 and DNAJB14 promote tetramerization. Heteromultimer with KCNH6/ERG2 and KCNH7/ERG3. Interacts with ALG10B. Forms a stable complex with KCNE1 or KCNE2, and that this heteromultimerization regulates Inward rectifier potassium channel activity. Interacts with CANX. The core-glycosylated, but not the fully glycosylated form interacts with RNF207. Interacts with NDFIP1 and NDFIP2; this interaction decreases the cell membrane expression by targeting KCNH2, through interaction with NEDD4L, for the degradation through the multivesicular bodies (MVBs)-lysosomal pathway. In terms of processing, phosphorylated on serine and threonine residues. Phosphorylation by PKA inhibits ion conduction. In terms of tissue distribution, highly expressed in brain and testis, slightly less so in heart, adrenal, retina and thymus. Detected at lower levels in lung, soleus, tibialis, and at very low levels in cornea and lens. A shorter transcript is detected in skeletal muscle. Found in pituitary.

Its subcellular location is the cell membrane. The catalysed reaction is K(+)(in) = K(+)(out). Its function is as follows. Pore-forming (alpha) subunit of voltage-gated inwardly rectifying potassium channel. Characterized by unusual gating kinetics by producing relatively small outward currents during membrane depolarization and large inward currents during subsequent repolarization which reflect a rapid inactivation during depolarization and quick recovery from inactivation but slow deactivation (closing) during repolarization. Channel properties are modulated by cAMP and subunit assembly. Forms a stable complex with KCNE1 or KCNE2, and that this heteromultimerization regulates inward rectifier potassium channel activity. The protein is Voltage-gated inwardly rectifying potassium channel KCNH2 of Rattus norvegicus (Rat).